The chain runs to 427 residues: Glutamate-1-semialdehyde 2,1-aminomutase (427 aa).

N6-(pyridoxal phosphate)lysine is present on lysine 265.

It belongs to the class-III pyridoxal-phosphate-dependent aminotransferase family. HemL subfamily. As to quaternary structure, homodimer. It depends on pyridoxal 5'-phosphate as a cofactor.

The protein localises to the cytoplasm. The catalysed reaction is (S)-4-amino-5-oxopentanoate = 5-aminolevulinate. Its pathway is porphyrin-containing compound metabolism; protoporphyrin-IX biosynthesis; 5-aminolevulinate from L-glutamyl-tRNA(Glu): step 2/2. The chain is Glutamate-1-semialdehyde 2,1-aminomutase from Burkholderia pseudomallei (strain 668).